The sequence spans 259 residues: Global transcriptional regulator CodY (259 aa).

The segment at Met1–Leu155 is GAF domain. The segment at residues Ala203–Arg222 is a DNA-binding region (H-T-H motif). Ser215 carries the post-translational modification Phosphoserine.

It belongs to the CodY family.

The protein resides in the cytoplasm. DNA-binding global transcriptional regulator which is involved in the adaptive response to starvation and acts by directly or indirectly controlling the expression of numerous genes in response to nutrient availability. During rapid exponential growth, CodY is highly active and represses genes whose products allow adaptation to nutrient depletion. The protein is Global transcriptional regulator CodY of Bacillus cereus (strain B4264).